An 81-amino-acid polypeptide reads, in one-letter code: Short neurotoxin 2 (81 aa).

Positions 1–21 are cleaved as a signal peptide; the sequence is MKTLLLTLVVVTIVCLDLGYT. Disulfide bonds link Cys24-Cys43, Cys38-Cys60, Cys62-Cys73, and Cys74-Cys79.

Belongs to the three-finger toxin family. Short-chain subfamily. Type I alpha-neurotoxin sub-subfamily. In terms of tissue distribution, expressed by the venom gland.

The protein resides in the secreted. Its function is as follows. Binds to muscle nicotinic acetylcholine receptor (nAChR) and inhibit acetylcholine from binding to the receptor, thereby impairing neuromuscular transmission. The polypeptide is Short neurotoxin 2 (Drysdalia coronoides (White-lipped snake)).